A 188-amino-acid chain; its full sequence is Elongation factor P (188 aa).

Belongs to the elongation factor P family.

It localises to the cytoplasm. It participates in protein biosynthesis; polypeptide chain elongation. Functionally, involved in peptide bond synthesis. Stimulates efficient translation and peptide-bond synthesis on native or reconstituted 70S ribosomes in vitro. Probably functions indirectly by altering the affinity of the ribosome for aminoacyl-tRNA, thus increasing their reactivity as acceptors for peptidyl transferase. This chain is Elongation factor P (efp), found in Ureaplasma parvum serovar 3 (strain ATCC 700970).